A 204-amino-acid chain; its full sequence is Guanylate kinase (204 aa).

The region spanning 18 to 196 is the Guanylate kinase-like domain; sequence PKLFTISAPA…SYEVLKSIFI (179 aa). Residue 25 to 32 coordinates ATP; sequence APAGAGKT.

Belongs to the guanylate kinase family.

The protein resides in the cytoplasm. The catalysed reaction is GMP + ATP = GDP + ADP. Essential for recycling GMP and indirectly, cGMP. The protein is Guanylate kinase of Chlamydia abortus (strain DSM 27085 / S26/3) (Chlamydophila abortus).